Here is a 359-residue protein sequence, read N- to C-terminus: Peptide chain release factor 1 (359 aa).

Position 233 is an N5-methylglutamine (Gln-233).

Belongs to the prokaryotic/mitochondrial release factor family. Methylated by PrmC. Methylation increases the termination efficiency of RF1.

The protein resides in the cytoplasm. In terms of biological role, peptide chain release factor 1 directs the termination of translation in response to the peptide chain termination codons UAG and UAA. The protein is Peptide chain release factor 1 of Clostridium acetobutylicum (strain ATCC 824 / DSM 792 / JCM 1419 / IAM 19013 / LMG 5710 / NBRC 13948 / NRRL B-527 / VKM B-1787 / 2291 / W).